The primary structure comprises 72 residues: Conotoxin LvVIA (72 aa).

Residues 1 to 17 form the signal peptide; that stretch reads VLIIAVLFLTASELVTA. Positions 18-41 are excised as a propeptide; that stretch reads DYTRDKWQYRAASLRDAMRNFRDT. Disulfide bonds link Cys44/Cys58, Cys51/Cys63, and Cys57/Cys70.

Belongs to the conotoxin O1 superfamily. As to expression, expressed by the venom duct.

It is found in the secreted. The polypeptide is Conotoxin LvVIA (Conus lividus (Livid cone)).